The chain runs to 291 residues: ATP synthase gamma chain (291 aa).

Belongs to the ATPase gamma chain family. F-type ATPases have 2 components, CF(1) - the catalytic core - and CF(0) - the membrane proton channel. CF(1) has five subunits: alpha(3), beta(3), gamma(1), delta(1), epsilon(1). CF(0) has three main subunits: a, b and c.

The protein resides in the cell inner membrane. Functionally, produces ATP from ADP in the presence of a proton gradient across the membrane. The gamma chain is believed to be important in regulating ATPase activity and the flow of protons through the CF(0) complex. The sequence is that of ATP synthase gamma chain from Burkholderia cenocepacia (strain ATCC BAA-245 / DSM 16553 / LMG 16656 / NCTC 13227 / J2315 / CF5610) (Burkholderia cepacia (strain J2315)).